Consider the following 329-residue polypeptide: Phenylalanine--tRNA ligase alpha subunit (329 aa).

Residue glutamate 254 participates in Mg(2+) binding.

It belongs to the class-II aminoacyl-tRNA synthetase family. Phe-tRNA synthetase alpha subunit type 1 subfamily. As to quaternary structure, tetramer of two alpha and two beta subunits. Requires Mg(2+) as cofactor.

The protein resides in the cytoplasm. The enzyme catalyses tRNA(Phe) + L-phenylalanine + ATP = L-phenylalanyl-tRNA(Phe) + AMP + diphosphate + H(+). The polypeptide is Phenylalanine--tRNA ligase alpha subunit (Haemophilus influenzae (strain 86-028NP)).